The chain runs to 250 residues: Ribosomal RNA small subunit methyltransferase J (250 aa).

S-adenosyl-L-methionine is bound by residues 101–102, 117–118, 153–154, and aspartate 171; these read RD, ER, and SS.

Belongs to the methyltransferase superfamily. RsmJ family.

It localises to the cytoplasm. The catalysed reaction is guanosine(1516) in 16S rRNA + S-adenosyl-L-methionine = N(2)-methylguanosine(1516) in 16S rRNA + S-adenosyl-L-homocysteine + H(+). In terms of biological role, specifically methylates the guanosine in position 1516 of 16S rRNA. The polypeptide is Ribosomal RNA small subunit methyltransferase J (Erwinia tasmaniensis (strain DSM 17950 / CFBP 7177 / CIP 109463 / NCPPB 4357 / Et1/99)).